Reading from the N-terminus, the 193-residue chain is MKRYLSVALAALVLTGCITQPPVEPTTPPVTIEPVTPPVPETPPPVDNVPPPPKMEQSIDWAASVEPLVAQMVNSNDVANGSILLLDSVKNNTNGRLPTAKATSALHQVLSSNKKFVLISPQQLAVAKQTLGLSEEDSLGSRSKAIGLARYVSAQYVLYSDVSGDVKSPTIEMQLMQAQTGEIIWSGNGPVKR.

The N-terminal stretch at 1 to 16 is a signal peptide; sequence MKRYLSVALAALVLTG. Residue Cys17 is the site of N-palmitoyl cysteine attachment. Cys17 is lipidated: S-diacylglycerol cysteine. The interval 24–55 is disordered; that stretch reads EPTTPPVTIEPVTPPVPETPPPVDNVPPPPKM. Residues 35–54 show a composition bias toward pro residues; it reads VTPPVPETPPPVDNVPPPPK.

The protein belongs to the LpoB family. As to quaternary structure, interacts with PBP1b.

It is found in the cell outer membrane. Functionally, regulator of peptidoglycan synthesis that is essential for the function of penicillin-binding protein 1B (PBP1b). This chain is Penicillin-binding protein activator LpoB, found in Yersinia enterocolitica serotype O:8 / biotype 1B (strain NCTC 13174 / 8081).